The sequence spans 57 residues: Preprotein translocase subunit SecG (57 aa).

At 1–33 (MARRRRYEGLNPFVAAGLIKFSEEGELERIKLT) the chain is on the cytoplasmic side. Residues 34-55 (PKSAVVISVALIAAILVLNLIH) form a helical membrane-spanning segment. Residues 56 to 57 (PL) are Extracellular-facing.

Belongs to the SEC61-beta family. Component of the protein translocase complex. Heterotrimer consisting of alpha (SecY), beta (SecG) and gamma (SecE) subunits. Can form oligomers of the heterotrimer.

It localises to the cell membrane. In terms of biological role, involved in protein export. The function of the beta subunit is unknown, but it may be involved in stabilization of the trimeric complex. The protein is Preprotein translocase subunit SecG of Pyrobaculum neutrophilum (strain DSM 2338 / JCM 9278 / NBRC 100436 / V24Sta) (Thermoproteus neutrophilus).